Here is a 421-residue protein sequence, read N- to C-terminus: UDP-N-acetylglucosamine 1-carboxyvinyltransferase (421 aa).

22–23 (KN) provides a ligand contact to phosphoenolpyruvate. Arg-93 serves as a coordination point for UDP-N-acetyl-alpha-D-glucosamine. The Proton donor role is filled by Cys-117. Position 117 is a 2-(S-cysteinyl)pyruvic acid O-phosphothioketal (Cys-117). UDP-N-acetyl-alpha-D-glucosamine contacts are provided by residues 122 to 126 (RPVDL), Asp-308, and Ile-330.

Belongs to the EPSP synthase family. MurA subfamily.

It is found in the cytoplasm. The catalysed reaction is phosphoenolpyruvate + UDP-N-acetyl-alpha-D-glucosamine = UDP-N-acetyl-3-O-(1-carboxyvinyl)-alpha-D-glucosamine + phosphate. It functions in the pathway cell wall biogenesis; peptidoglycan biosynthesis. Functionally, cell wall formation. Adds enolpyruvyl to UDP-N-acetylglucosamine. This Pseudomonas putida (strain ATCC 700007 / DSM 6899 / JCM 31910 / BCRC 17059 / LMG 24140 / F1) protein is UDP-N-acetylglucosamine 1-carboxyvinyltransferase.